Reading from the N-terminus, the 75-residue chain is Serine rich endogenous peptide 4 (75 aa).

A signal peptide spans 1–31; sequence MATKTSNLGHLLLSLFILLLFILSQVGVAQA. The segment at 51–75 is disordered; it reads PPPLRGIVKPPIASFHSASPKDKGP. Positions 61–75 match the SCOOP motif motif; it reads PIASFHSASPKDKGP. The short motif at 67 to 69 is the SxS motif essential for MIK2 binding element; that stretch reads SAS.

It belongs to the serine rich endogenous peptide (SCOOP) phytocytokine family. Interacts with MIK2 (via extracellular leucine-rich repeat domain); this interaction triggers the formation of complex between MIK2 and the BAK1/SERK3 and SERK4 coreceptors, and subsequent BAK1 activation by phosphorylation. In terms of tissue distribution, mostly expressed in leaves and seedlings shoots, and, to a lower extent, in roots, stems, siliques, seeds and flowers.

The protein resides in the cell membrane. It localises to the secreted. Its subcellular location is the extracellular space. The protein localises to the apoplast. Brassicaceae-specific phytocytokine (plant endogenous peptide released into the apoplast) perceived by MIK2 in a BAK1/SERK3 and SERK4 coreceptors-dependent manner, that modulates various physiological and antimicrobial processes including growth prevention and reactive oxygen species (ROS) response regulation. Inhibits root growth. Prevents general growth and development. Exhibits antibacterial effects against Pseudomonas syringae pv. tomato DC3000, Ralstonia solanacearum, Bacillus subtilis and Agrobacterium tumefaciens, thus being an antimicrobial peptide (AMP). This chain is Serine rich endogenous peptide 4, found in Arabidopsis thaliana (Mouse-ear cress).